The chain runs to 357 residues: Cinnamyl alcohol dehydrogenase 1 (357 aa).

An Enoyl reductase (ER) domain is found at 20–348; the sequence is GILSPYTYTL…KNDVRYRFVV (329 aa). C47 contacts Zn(2+). S49 is an NADP(+) binding site. The Zn(2+) site is built by H69, E70, C100, C103, C106, C114, and C163. Residues T167, 188–193, 211–216, T251, G275, and 298–300 each bind NADP(+); these read GLGGVG, SSSDKK, and SFI.

Belongs to the zinc-containing alcohol dehydrogenase family. Homodimer. The cofactor is Zn(2+). In terms of tissue distribution, accumulates mainly in the placenta of red fruits, and, to a lower extent, in green fruits placenta, pericarp and seeds.

Its subcellular location is the cytoplasm. The enzyme catalyses (E)-cinnamyl alcohol + NADP(+) = (E)-cinnamaldehyde + NADPH + H(+). It carries out the reaction (E)-coniferol + NADP(+) = (E)-coniferaldehyde + NADPH + H(+). The catalysed reaction is (E)-sinapyl alcohol + NADP(+) = (E)-sinapaldehyde + NADPH + H(+). It catalyses the reaction (E)-4-coumaroyl alcohol + NADP(+) = (E)-4-coumaraldehyde + NADPH + H(+). The enzyme catalyses (E)-caffeyl alcohol + NADP(+) = (E)-caffeyl aldehyde + NADPH + H(+). It carries out the reaction vanillin + NADPH + H(+) = 4-hydroxy-3-methoxy-benzenemethanol + NADP(+). It functions in the pathway aromatic compound metabolism; phenylpropanoid biosynthesis. Its activity is regulated as follows. Inhibited, in a concentration-dependent manner, by N-(O-hydroxyphenyl) sulfinamoyltertiobutyl acetate (OHPAS), a specific cinnamyl alcohol dehydrogenase (CAD) inhibitor, as well as by ethylenediaminetetraacetic acid (EDTA), a metalloenzyme inhibitor. Involved in the biosynthesis of capsinoids natural products (e.g. capsiate), non-pungent alkaloids synthesized from phenylpropanoid intermediates in the placental tissue of sweet chili pepper fruit acting as repellant on herbivorous mammals. Catalyzes the reduction of vanillin to generate vanillyl alcohol, a precursor of capsiate, a non-pungent component that accumulates mainly in the placenta of mature red fruits, but also in green fruits to lower levels. Involved in lignin biosynthesis. Catalyzes the final step specific for the production of lignin monomers. Mediates the conversion of cinnamaldehyde and coniferaldehyde to cinnamyl alcohol and coniferyl alcohol, respectively. Catalyzes the NADPH-dependent reduction of 5-hydroxyconiferaldehyde, sinapaldehyde, 4-coumaraldehyde and caffeyl aldehyde to their respective alcohols. The polypeptide is Cinnamyl alcohol dehydrogenase 1 (Capsicum annuum (Capsicum pepper)).